We begin with the raw amino-acid sequence, 775 residues long: Mitochondrial intermediate peptidase (775 aa).

A mitochondrion-targeting transit peptide spans methionine 1 to histidine 28. Histidine 558 serves as a coordination point for Zn(2+). Glutamate 559 is an active-site residue. Residues histidine 562 and histidine 565 each contribute to the Zn(2+) site.

Belongs to the peptidase M3 family. The cofactor is Zn(2+).

The protein resides in the mitochondrion matrix. It catalyses the reaction Release of an N-terminal octapeptide as second stage of processing of some proteins imported into the mitochondrion.. Its function is as follows. Cleaves proteins, imported into the mitochondrion, to their mature size. While most mitochondrial precursor proteins are processed to the mature form in one step by mitochondrial processing peptidase (MPP), the sequential cleavage by MIP of an octapeptide after initial processing by MPP is a required step for a subgroup of nuclear-encoded precursor proteins destined for the matrix or the inner membrane. The protein is Mitochondrial intermediate peptidase (OCT1) of Schizophyllum commune (Split gill fungus).